The chain runs to 377 residues: Alanine racemase (377 aa).

The Proton acceptor; specific for D-alanine role is filled by Lys35. The residue at position 35 (Lys35) is an N6-(pyridoxal phosphate)lysine. Arg130 is a substrate binding site. The Proton acceptor; specific for L-alanine role is filled by Tyr260. Substrate is bound at residue Met312.

It belongs to the alanine racemase family. It depends on pyridoxal 5'-phosphate as a cofactor.

It carries out the reaction L-alanine = D-alanine. It participates in amino-acid biosynthesis; D-alanine biosynthesis; D-alanine from L-alanine: step 1/1. In terms of biological role, catalyzes the interconversion of L-alanine and D-alanine. May also act on other amino acids. The sequence is that of Alanine racemase (alr) from Leptothrix cholodnii (strain ATCC 51168 / LMG 8142 / SP-6) (Leptothrix discophora (strain SP-6)).